Consider the following 202-residue polypeptide: Remorin 1.4 (202 aa).

The span at 1–10 shows a compositional bias: basic and acidic residues; the sequence is MAEEEPKKVT. Positions 1-79 are disordered; sequence MAEEEPKKVT…VEEEKKEGSV (79 aa). The span at 25 to 39 shows a compositional bias: low complexity; the sequence is EKPAAAADVAPQEKP. The span at 40 to 50 shows a compositional bias: pro residues; that stretch reads VAPPPVLPSPA. Residues 68-79 are compositionally biased toward basic and acidic residues; it reads KEVEEEKKEGSV. Positions 123 to 169 form a coiled coil; that stretch reads ENNKKAAVEAELKKMEEQLEKKKAEYVEQMKNKIAQIHKEAEEKRAM.

The protein belongs to the remorin family.

The polypeptide is Remorin 1.4 (Arabidopsis thaliana (Mouse-ear cress)).